The chain runs to 249 residues: ATP synthase subunit a, chloroplastic (249 aa).

Transmembrane regions (helical) follow at residues 38–58 (GQVLITSWVVMAIIIITSVIA), 97–117 (VPFVGTLFLFIFISNWSGALI), 136–156 (INTTVALALLTSVAYFYAGLS), 201–221 (LVVAVLISLVPLVIPVPMMLL), and 222–242 (GLFTSGIQALIFATLAAAYIG).

Belongs to the ATPase A chain family. F-type ATPases have 2 components, CF(1) - the catalytic core - and CF(0) - the membrane proton channel. CF(1) has five subunits: alpha(3), beta(3), gamma(1), delta(1), epsilon(1). CF(0) has four main subunits: a, b, b' and c.

The protein resides in the plastid. The protein localises to the chloroplast thylakoid membrane. Key component of the proton channel; it plays a direct role in the translocation of protons across the membrane. The sequence is that of ATP synthase subunit a, chloroplastic from Chlorokybus atmophyticus (Soil alga).